We begin with the raw amino-acid sequence, 348 residues long: 4-hydroxy-3-methylbut-2-en-1-yl diphosphate synthase (flavodoxin) (348 aa).

4 residues coordinate [4Fe-4S] cluster: C263, C266, C298, and E305.

It belongs to the IspG family. [4Fe-4S] cluster is required as a cofactor.

It carries out the reaction (2E)-4-hydroxy-3-methylbut-2-enyl diphosphate + oxidized [flavodoxin] + H2O + 2 H(+) = 2-C-methyl-D-erythritol 2,4-cyclic diphosphate + reduced [flavodoxin]. Its pathway is isoprenoid biosynthesis; isopentenyl diphosphate biosynthesis via DXP pathway; isopentenyl diphosphate from 1-deoxy-D-xylulose 5-phosphate: step 5/6. Its function is as follows. Converts 2C-methyl-D-erythritol 2,4-cyclodiphosphate (ME-2,4cPP) into 1-hydroxy-2-methyl-2-(E)-butenyl 4-diphosphate. The sequence is that of 4-hydroxy-3-methylbut-2-en-1-yl diphosphate synthase (flavodoxin) from Dehalococcoides mccartyi (strain CBDB1).